Here is a 96-residue protein sequence, read N- to C-terminus: UPF0235 protein VV1_1522 (96 aa).

It belongs to the UPF0235 family.

In Vibrio vulnificus (strain CMCP6), this protein is UPF0235 protein VV1_1522.